Reading from the N-terminus, the 238-residue chain is Monocyte to macrophage differentiation factor (238 aa).

Residues 1 to 28 (MRFKNRFQRFMNHRAPANGRYKPTCYEH) are Cytoplasmic-facing. The chain crosses the membrane as a helical span at residues 29 to 49 (AANCYTHAFLIVPAIVGSALL). Residues 50 to 61 (HRLSDDCWEKIT) are Lumenal-facing. A helical membrane pass occupies residues 62–82 (AWIYGMGLCALFIVSTVFHIV). The Cytoplasmic portion of the chain corresponds to 83-101 (SWKKSHLRTVEHCFHMCDR). The helical transmembrane segment at 102–122 (MVIYFFIAASYAPWLNLRELG) threads the bilayer. Topologically, residues 123-124 (PL) are lumenal. The chain crosses the membrane as a helical span at residues 125–145 (ASHMRWFIWLMAAGGTIYVFL). Residues 146-151 (YHEKYK) are Cytoplasmic-facing. A helical transmembrane segment spans residues 152 to 172 (VVELFFYLTMGFSPALVVTSM). The Lumenal segment spans residues 173 to 174 (NN). Residues 175-195 (TDGLQELACGGLIYCLGVVFF) form a helical membrane-spanning segment. Topologically, residues 196 to 198 (KSD) are cytoplasmic. A helical transmembrane segment spans residues 199–219 (GIIPFAHAIWHLFVATAAAVH). The Lumenal segment spans residues 220 to 238 (YYAIWKYLYRSPTDFMRHL).

Belongs to the ADIPOR family. In terms of tissue distribution, exhibits relatively ubiquitous expression with preferential expression in mature (in vitro differentiated) macrophages.

It is found in the late endosome membrane. The protein resides in the lysosome membrane. Functionally, involved in the dynamics of lysosomal membranes associated with microglial activation following brain lesion. The protein is Monocyte to macrophage differentiation factor of Homo sapiens (Human).